The primary structure comprises 717 residues: Delta-1-pyrroline-5-carboxylate synthase A (717 aa).

Residues 1-296 (MEELDRSRAF…WAPITDSNAR (296 aa)) are glutamate 5-kinase. The substrate site is built by serine 60, aspartate 157, and asparagine 176. ATP is bound by residues 196 to 197 (SD) and 236 to 242 (RGGMTAK). The gamma-glutamyl phosphate reductase stretch occupies residues 297–717 (DMAVAARESS…YTHQDIPIQA (421 aa)).

In the N-terminal section; belongs to the glutamate 5-kinase family. This sequence in the C-terminal section; belongs to the gamma-glutamyl phosphate reductase family.

The enzyme catalyses L-glutamate + ATP = L-glutamyl 5-phosphate + ADP. The catalysed reaction is L-glutamate 5-semialdehyde + phosphate + NADP(+) = L-glutamyl 5-phosphate + NADPH + H(+). It participates in amino-acid biosynthesis; L-proline biosynthesis; L-glutamate 5-semialdehyde from L-glutamate: step 1/2. The protein operates within amino-acid biosynthesis; L-proline biosynthesis; L-glutamate 5-semialdehyde from L-glutamate: step 2/2. In terms of biological role, P5CS plays a key role in proline biosynthesis, leading to osmoregulation in plants. This Arabidopsis thaliana (Mouse-ear cress) protein is Delta-1-pyrroline-5-carboxylate synthase A (P5CSA).